The following is a 653-amino-acid chain: Cytidine monophosphate-N-acetylneuraminic acid hydroxylase (653 aa).

Positions 11 to 120 (LSPEETSELK…PEYNEDGSLD (110 aa)) constitute a Rieske domain. Positions 62, 64, 83, and 86 each coordinate [2Fe-2S] cluster. The interval 596-622 (WNPSQATPAVEAKDPSSDSKDSATKPG) is disordered. The segment covering 606–618 (EAKDPSSDSKDSA) has biased composition (basic and acidic residues). A helical membrane pass occupies residues 630-647 (LLRPLGIVVALVGVGVAI).

It belongs to the CMP-Neu5Ac hydroxylase family. [2Fe-2S] cluster is required as a cofactor.

The protein localises to the membrane. The enzyme catalyses CMP-N-acetyl-beta-neuraminate + 2 Fe(II)-[cytochrome b5] + O2 + 2 H(+) = CMP-N-glycoloyl-beta-neuraminate + 2 Fe(III)-[cytochrome b5] + H2O. It participates in amino-sugar metabolism; N-acetylneuraminate metabolism. Sialic acids are components of carbohydrate chains of glycoconjugates and are involved in cell-cell recognition and cell-pathogen interactions. Catalyzes the conversion of CMP-N-acetylneuraminic acid (CMP-Neu5Ac) into its hydroxylated derivative CMP-N-glycolylneuraminic acid (CMP-Neu5Gc), a sialic acid abundantly expressed at the surface of many cells. In Asterias rubens (Common European starfish), this protein is Cytidine monophosphate-N-acetylneuraminic acid hydroxylase (cnh).